The primary structure comprises 469 residues: F-box only protein 3 (469 aa).

An F-box domain is found at 10–56 (PLTLESLPTDPLLLILSFLDYRDLINCCYVSRRLSQLSSHDPLWRRH). Residues 278-408 (VATTGDITVS…FHMACPTFRV (131 aa)) form the ApaG domain. Over residues 419–449 (EYEEMEEEEEEEEEEDDDDSADMDESDDDEE) the composition is skewed to acidic residues. Residues 419-454 (EYEEMEEEEEEEEEEDDDDSADMDESDDDEEERQRR) are disordered.

In terms of assembly, part of a SCF (SKP1-cullin-F-box) protein ligase complex SCF(FBXO3) consisting of FBXO3, SKP1, CUL1 and RBX1. Interacts with PML, interaction is direct and takes place either alone or within the SCF complex.

The protein resides in the nucleus. It functions in the pathway protein modification; protein ubiquitination. Substrate recognition component of the SCF (SKP1-CUL1-F-box protein)-type E3 ubiquitin ligase complex, SCF(FBXO3), which mediates the ubiquitination and subsequent proteasomal degradation of target proteins. Mediates the ubiquitination of HIPK2 and probably that of EP300, leading to rapid degradation by the proteasome. In the presence of PML, HIPK2 ubiquitination still occurs, but degradation is prevented. PML, HIPK2 and FBXO3 may act synergically to activate p53/TP53-dependent transactivation. The SCF(FBXO3) also acts as a regulator of inflammation by mediating ubiquitination and degradation of FBXL2 in response to lipopolysaccharide (LPS). The SCF(FBXO3) complex specifically recognizes FBXL2 phosphorylated at 'Thr-404' and promotes its ubiquitination. The polypeptide is F-box only protein 3 (FBXO3) (Bos taurus (Bovine)).